A 329-amino-acid chain; its full sequence is 4-hydroxythreonine-4-phosphate dehydrogenase (329 aa).

The substrate site is built by His136 and Thr137. The a divalent metal cation site is built by His166, His211, and His266. 3 residues coordinate substrate: Lys274, Asn283, and Arg292.

It belongs to the PdxA family. In terms of assembly, homodimer. Zn(2+) serves as cofactor. Mg(2+) is required as a cofactor. Requires Co(2+) as cofactor.

The protein localises to the cytoplasm. It catalyses the reaction 4-(phosphooxy)-L-threonine + NAD(+) = 3-amino-2-oxopropyl phosphate + CO2 + NADH. It participates in cofactor biosynthesis; pyridoxine 5'-phosphate biosynthesis; pyridoxine 5'-phosphate from D-erythrose 4-phosphate: step 4/5. Functionally, catalyzes the NAD(P)-dependent oxidation of 4-(phosphooxy)-L-threonine (HTP) into 2-amino-3-oxo-4-(phosphooxy)butyric acid which spontaneously decarboxylates to form 3-amino-2-oxopropyl phosphate (AHAP). The sequence is that of 4-hydroxythreonine-4-phosphate dehydrogenase from Shigella boydii serotype 18 (strain CDC 3083-94 / BS512).